Here is a 362-residue protein sequence, read N- to C-terminus: Peptide chain release factor 1 (362 aa).

The residue at position 235 (Gln235) is an N5-methylglutamine.

Belongs to the prokaryotic/mitochondrial release factor family. In terms of processing, methylated by PrmC. Methylation increases the termination efficiency of RF1.

It localises to the cytoplasm. Its function is as follows. Peptide chain release factor 1 directs the termination of translation in response to the peptide chain termination codons UAG and UAA. The protein is Peptide chain release factor 1 of Acinetobacter baumannii (strain ACICU).